The sequence spans 779 residues: Acyl-CoA dehydrogenase family member 11 (779 aa).

N6-acetyllysine occurs at positions 163, 166, and 175. Serine 210 is modified (phosphoserine). Position 323 is a phosphotyrosine (tyrosine 323). Residues lysine 368 and lysine 390 each carry the N6-succinyllysine modification. Residues 503-513 (FCMTEPNVSSS), 511-513 (SSS), 537-539 (WSS), and serine 539 contribute to the FAD site. Residue serine 513 coordinates substrate. Position 628 to 631 (628 to 631 (GPGR)) interacts with substrate. FAD contacts are provided by residues arginine 656, glutamine 726, and 726–730 (QVHGG). Glycine 754 contacts substrate. FAD-binding positions include 755–757 (PDE) and glutamate 757. At lysine 765 the chain carries N6-acetyllysine.

Belongs to the acyl-CoA dehydrogenase family. In terms of assembly, homodimer. FAD serves as cofactor.

It localises to the peroxisome. The protein resides in the mitochondrion membrane. The enzyme catalyses a 2,3-saturated acyl-CoA + oxidized [electron-transfer flavoprotein] + H(+) = a (2E)-enoyl-CoA + reduced [electron-transfer flavoprotein]. It catalyses the reaction docosanoyl-CoA + oxidized [electron-transfer flavoprotein] + H(+) = (2E)-docosenoyl-CoA + reduced [electron-transfer flavoprotein]. It carries out the reaction tetracosanoyl-CoA + oxidized [electron-transfer flavoprotein] + H(+) = (2E)-tetracosenoyl-CoA + reduced [electron-transfer flavoprotein]. The catalysed reaction is eicosanoyl-CoA + oxidized [electron-transfer flavoprotein] + H(+) = (2E)-eicosenoyl-CoA + reduced [electron-transfer flavoprotein]. The enzyme catalyses hexacosanoyl-CoA + oxidized [electron-transfer flavoprotein] + H(+) = (2E)-hexacosenoyl-CoA + reduced [electron-transfer flavoprotein]. It catalyses the reaction tricosanoyl-CoA + oxidized [electron-transfer flavoprotein] + H(+) = (2E)-tricosenoyl-CoA + reduced [electron-transfer flavoprotein]. Its pathway is lipid metabolism; fatty acid beta-oxidation. Functionally, acyl-CoA dehydrogenase, that exhibits maximal activity towards saturated C22-CoA. Probably participates in beta-oxydation and energy production but could also play a role in the metabolism of specific fatty acids to control fatty acids composition of cellular lipids in brain. The polypeptide is Acyl-CoA dehydrogenase family member 11 (Acad11) (Mus musculus (Mouse)).